A 752-amino-acid chain; its full sequence is MSNESKCPFHQTAGGGTTNRDWWPDQLNLRILHQHGTKSDPMDPDFDYAKAFKSLDFQALKQDLTALMTDSQDWWPADFGHYGPLFIRMAWHSAGTYRIGDGRGGAGSGQQRFAPLNSWPDNVSLDKARRLLWPIKQKYGNKISWADLIVLTGNVALESMGFKTFGFSGGRADVWEPDEDVYWGSEKVWLGGDTRYGKDQVKAQAPGQGDLVAEPAKHGEEQNRDLSAERNLENPLAAVQMGLIYVNPEGPEGNPDPVASGKDIRETFGRMAMNDEETVALIAGGHAFGKTHGAGPADNVGAEPEAAGLELQGLGWANKFGTGKGGDTITSGLEVTWTSTPTQWSNEYLNNLFNFEWELTKSPAGAHQWQPKEGKGAGTVPDAHDPSKRHAPSMLTSDLALRFDPIYEPIARRFKDNPDQLADAFARAWYKLIHRDMGPLARYLGPEMPNEELLWQDPLPKADQPLPSEQDIAALKTKVLASGLSVGELVSTAWAAASTFRGSDKRGGANGARLRLAPQKDWPANQGTGKVLAALEQIQGEFNNGGKHISLADLIVLAGTAAVEKAAKDAGYAGNVQFRPGRVDASQEQTDVESFAVLEPLADGFRNFTKARYSVKAEKLLLDKAQLLTLTAPELTVLIGGLRVLGANHGGSKHGVFTDQPGTLSNDFFRNLLDMGVEWKATSGDNESFEGRDRKTGQVKWTGTRVDLVFGSHAQLRALSEVYGSSDGKDKFVKDFVAAWVKVMELDRFDLK.

Residues 1-21 (MSNESKCPFHQTAGGGTTNRD) are disordered. Residues 91-245 (WHSAGTYRIG…LAAVQMGLIY (155 aa)) constitute a cross-link (tryptophyl-tyrosyl-methioninium (Trp-Tyr) (with M-271)). The active-site Proton acceptor is His-92. The interval 204 to 228 (QAPGQGDLVAEPAKHGEEQNRDLSA) is disordered. A compositionally biased stretch (basic and acidic residues) spans 215-228 (PAKHGEEQNRDLSA). A cross-link (tryptophyl-tyrosyl-methioninium (Tyr-Met) (with W-91)) is located at residues 245-271 (YVNPEGPEGNPDPVASGKDIRETFGRM). Position 286 (His-286) interacts with heme. The disordered stretch occupies residues 366–391 (AHQWQPKEGKGAGTVPDAHDPSKRHA).

Belongs to the peroxidase family. Peroxidase/catalase subfamily. In terms of assembly, homodimer or homotetramer. Heme b is required as a cofactor. Formation of the three residue Trp-Tyr-Met cross-link is important for the catalase, but not the peroxidase activity of the enzyme.

The catalysed reaction is H2O2 + AH2 = A + 2 H2O. It carries out the reaction 2 H2O2 = O2 + 2 H2O. Bifunctional enzyme with both catalase and broad-spectrum peroxidase activity. This is Catalase-peroxidase from Pseudomonas putida (strain W619).